The following is a 555-amino-acid chain: Exodeoxyribonuclease 7 large subunit (555 aa).

This sequence belongs to the XseA family. In terms of assembly, heterooligomer composed of large and small subunits.

The protein localises to the cytoplasm. It carries out the reaction Exonucleolytic cleavage in either 5'- to 3'- or 3'- to 5'-direction to yield nucleoside 5'-phosphates.. Its function is as follows. Bidirectionally degrades single-stranded DNA into large acid-insoluble oligonucleotides, which are then degraded further into small acid-soluble oligonucleotides. The chain is Exodeoxyribonuclease 7 large subunit from Chlamydia felis (strain Fe/C-56) (Chlamydophila felis).